A 45-amino-acid chain; its full sequence is Small polypeptide DEVIL 23 (45 aa).

The tract at residues 13–44 is required for DVL/RTFL small polypeptide activity; the sequence is KSTLRCWDWCKEQRTRAYIIWRCLIFLLRWDD. Residues 22 to 39 form a helical membrane-spanning segment; the sequence is CKEQRTRAYIIWRCLIFL.

This sequence belongs to the DVL/RTFL small polypeptides family.

It localises to the cell membrane. Functionally, small polypeptide acting as a regulatory molecule which coordinates cellular responses required for differentiation, growth and development, probably by restricting polar cell proliferation in lateral organs and coordinating socket cell recruitment and differentiation at trichome sites. This chain is Small polypeptide DEVIL 23, found in Arabidopsis thaliana (Mouse-ear cress).